The following is a 284-amino-acid chain: TM2 domain-containing protein almondex (284 aa).

A signal peptide spans 1-32 (MRLQRQCIVVNMRSAIVLIMIFVLTGIRNSET). A disordered region spans residues 33-63 (ASGGNQMDLSDSKGDHKDNSNASNGNGNAND). The Extracellular segment spans residues 33–225 (ASGGNQMDLS…NWTQGYRWST (193 aa)). Residues 42–51 (SDSKGDHKDN) show a composition bias toward basic and acidic residues. Over residues 52–63 (SNASNGNGNAND) the composition is skewed to low complexity. Residues Asn-53, Asn-89, Asn-141, Asn-194, Asn-206, and Asn-216 are each glycosylated (N-linked (GlcNAc...) asparagine). The 48-residue stretch at 220-267 (GYRWSTALLISLTLGGFGADRFYLGHWQEGIGKLFSFGGLGVWTIIDV) folds into the TM2 domain. A helical membrane pass occupies residues 226-246 (ALLISLTLGGFGADRFYLGHW). Over 247–249 (QEG) the chain is Cytoplasmic. A helical membrane pass occupies residues 250–270 (IGKLFSFGGLGVWTIIDVLLI). At 271–284 (SMHYLGPADGSLYI) the chain is on the extracellular side.

The protein belongs to the TM2 family. In terms of tissue distribution, expressed in female ovary, mainly in nurse cells (at protein level). Expressed in the brain at low levels (at protein level).

It localises to the membrane. It is found in the vesicle. Positive regulator of Notch signaling during lateral inhibition and boundary formation. Interacts with Notch signaling at the membrane, at the level of gamma-secretase-mediated S3 cleavage. May regulate Notch signaling by regulating the subcellular localization of N/Notch in a context dependent manner. Maternal neurogenic factor involved in Notch signaling-dependent mesectodermal and neuroectodermal specification during early embryogenesis. Functions cooperatively with bisc/TM2D1 and amrt/TM2D2. Required for maintenance of neuronal function. Involved in imaginal specification of eyes and wings. This Drosophila melanogaster (Fruit fly) protein is TM2 domain-containing protein almondex.